Consider the following 251-residue polypeptide: Haloacid dehalogenase-like hydrolase domain-containing protein 3 (251 aa).

Residue lysine 15 is modified to N6-acetyllysine; alternate. Residue lysine 15 is modified to N6-succinyllysine; alternate.

The protein belongs to the HAD-like hydrolase superfamily.

This Homo sapiens (Human) protein is Haloacid dehalogenase-like hydrolase domain-containing protein 3 (HDHD3).